The sequence spans 521 residues: Serine/threonine-protein kinase A (521 aa).

Residues 15–289 (YQLVELVGSG…DVIIRAIDAI (275 aa)) form the Protein kinase domain. ATP is bound by residues 21–29 (VGSGAMGQV) and Lys45. The active-site Proton acceptor is Asp148.

This sequence belongs to the protein kinase superfamily. Ser/Thr protein kinase family. In terms of processing, autophosphorylated.

The enzyme catalyses L-seryl-[protein] + ATP = O-phospho-L-seryl-[protein] + ADP + H(+). It carries out the reaction L-threonyl-[protein] + ATP = O-phospho-L-threonyl-[protein] + ADP + H(+). In terms of biological role, protein kinase that regulates cellular motility via phosphorylation of membrane proteins. In Synechocystis sp. (strain ATCC 27184 / PCC 6803 / Kazusa), this protein is Serine/threonine-protein kinase A (spkA).